The chain runs to 122 residues: Large ribosomal subunit protein bL12 (122 aa).

Belongs to the bacterial ribosomal protein bL12 family. In terms of assembly, homodimer. Part of the ribosomal stalk of the 50S ribosomal subunit. Forms a multimeric L10(L12)X complex, where L10 forms an elongated spine to which 2 to 4 L12 dimers bind in a sequential fashion. Binds GTP-bound translation factors.

Forms part of the ribosomal stalk which helps the ribosome interact with GTP-bound translation factors. Is thus essential for accurate translation. The chain is Large ribosomal subunit protein bL12 from Lacticaseibacillus casei (strain BL23) (Lactobacillus casei).